The sequence spans 220 residues: Lipoprotein-releasing system ATP-binding protein LolD (220 aa).

The ABC transporter domain occupies 1–220 (MRAVDIHKSY…YRMKDGQWQS (220 aa)). Position 37–44 (37–44 (GASGAGKS)) interacts with ATP.

This sequence belongs to the ABC transporter superfamily. Lipoprotein translocase (TC 3.A.1.125) family. The complex is composed of two ATP-binding proteins (LolD) and two transmembrane proteins (LolC and LolE).

It is found in the cell inner membrane. Part of the ABC transporter complex LolCDE involved in the translocation of mature outer membrane-directed lipoproteins, from the inner membrane to the periplasmic chaperone, LolA. Responsible for the formation of the LolA-lipoprotein complex in an ATP-dependent manner. The polypeptide is Lipoprotein-releasing system ATP-binding protein LolD (Bdellovibrio bacteriovorus (strain ATCC 15356 / DSM 50701 / NCIMB 9529 / HD100)).